The primary structure comprises 503 residues: Activin receptor type-1-like (503 aa).

Residues 1–21 (MTLGSPRRGLLMLLMALVTQG) form the signal peptide. Over 22-118 (DPVKPSRGPL…PSEQPGTDGQ (97 aa)) the chain is Extracellular. Cystine bridges form between Cys-34-Cys-51, Cys-36-Cys-41, and Cys-46-Cys-69. The tract at residues 73–76 (HREL) is mediates specificity for BMP ligand. Intrachain disulfides connect Cys-77–Cys-89 and Cys-90–Cys-95. Asn-98 is a glycosylation site (N-linked (GlcNAc...) asparagine). A helical transmembrane segment spans residues 119 to 141 (LALILGPVLALLALVALGVLGLW). Over 142 to 503 (HVRRRQEKQR…NSPEKPKVIQ (362 aa)) the chain is Cytoplasmic. Ser-155, Ser-160, and Ser-161 each carry phosphoserine. Positions 172-201 (SMLGDLLDSDCTTGSGSGLPFLVQRTVARQ) constitute a GS domain. Residues 202–492 (VALVECVGKG…LRIKKTLQKI (291 aa)) form the Protein kinase domain. ATP contacts are provided by residues 208-216 (VGKGRYGEV) and Lys-229. Asp-330 acts as the Proton acceptor in catalysis.

Belongs to the protein kinase superfamily. TKL Ser/Thr protein kinase family. TGFB receptor subfamily. As to quaternary structure, interacts with TSC22D1/TSC-22. Mg(2+) serves as cofactor. It depends on Mn(2+) as a cofactor.

It is found in the cell membrane. It carries out the reaction L-threonyl-[receptor-protein] + ATP = O-phospho-L-threonyl-[receptor-protein] + ADP + H(+). It catalyses the reaction L-seryl-[receptor-protein] + ATP = O-phospho-L-seryl-[receptor-protein] + ADP + H(+). Type I receptor for TGF-beta family ligands BMP9/GDF2 and BMP10 and important regulator of normal blood vessel development. On ligand binding, forms a receptor complex consisting of two type II and two type I transmembrane serine/threonine kinases. Type II receptors phosphorylate and activate type I receptors which autophosphorylate, then bind and activate SMAD transcriptional regulators. May bind activin as well. The polypeptide is Activin receptor type-1-like (ACVRL1) (Pongo abelii (Sumatran orangutan)).